Consider the following 169-residue polypeptide: Interleukin-36 gamma (169 aa).

The propeptide occupies 1 to 17; it reads MRGTPGDADGGGRAVYQ.

It belongs to the IL-1 family. As to quaternary structure, interacts with cargo receptor TMED10; the interaction mediates the translocation from the cytoplasm into the ERGIC (endoplasmic reticulum-Golgi intermediate compartment) and thereby secretion. N-terminal truncation leads to a dramatic enhancement of its activity (&gt;1000-fold). Proteolytically cleaved by cathepsin CTSG. In terms of tissue distribution, highly expressed in tissues containing epithelial cells: skin, lung, stomach and esophagus. Expressed in bronchial epithelial. In skin is expressed only in keratinocytes but not in fibroblasts, endothelial cells or melanocytes. Up-regulated in lesional psoriasis skin. Expressed in monocyte-derived dendritic cells and M1 macrophages.

The protein localises to the cytoplasm. It is found in the secreted. Its function is as follows. Cytokine that binds to and signals through the IL1RL2/IL-36R receptor which in turn activates NF-kappa-B and MAPK signaling pathways in target cells. Part of the IL-36 signaling system that is thought to be present in epithelial barriers and to take part in local inflammatory response; similar to the IL-1 system with which it shares the coreceptor IL1RAP. Seems to be involved in skin inflammatory response by acting on keratinocytes, dendritic cells and indirectly on T-cells to drive tissue infiltration, cell maturation and cell proliferation. In cultured keratinocytes induces the expression of macrophage, T-cell, and neutrophil chemokines, such as CCL3, CCL4, CCL5, CCL2, CCL17, CCL22, CL20, CCL5, CCL2, CCL17, CCL22, CXCL8, CCL20 and CXCL1; also stimulates its own expression and that of the prototypic cutaneous pro-inflammatory parameters TNF-alpha, S100A7/psoriasin and inducible NOS. May play a role in pro-inflammatory responses during particular neutrophilic airway inflammation: activates mitogen-activated protein kinases and NF-kappa B in primary lung fibroblasts, and stimulates the expression of IL-8 and CXCL3 and Th17 chemokine CCL20 in lung fibroblasts. May be involved in the innate immune response to fungal pathogens, such as Aspergillus fumigatus. The sequence is that of Interleukin-36 gamma from Homo sapiens (Human).